Consider the following 427-residue polypeptide: Enolase (427 aa).

Gln163 is a binding site for (2R)-2-phosphoglycerate. Catalysis depends on Glu205, which acts as the Proton donor. 3 residues coordinate Mg(2+): Asp242, Glu285, and Asp312. (2R)-2-phosphoglycerate is bound by residues Lys337, Arg366, Ser367, and Lys388. Lys337 functions as the Proton acceptor in the catalytic mechanism.

It belongs to the enolase family. Mg(2+) serves as cofactor.

Its subcellular location is the cytoplasm. It is found in the secreted. The protein resides in the cell surface. It carries out the reaction (2R)-2-phosphoglycerate = phosphoenolpyruvate + H2O. Its pathway is carbohydrate degradation; glycolysis; pyruvate from D-glyceraldehyde 3-phosphate: step 4/5. Its function is as follows. Catalyzes the reversible conversion of 2-phosphoglycerate (2-PG) into phosphoenolpyruvate (PEP). It is essential for the degradation of carbohydrates via glycolysis. The sequence is that of Enolase from Rhodopseudomonas palustris (strain HaA2).